Consider the following 356-residue polypeptide: tRNA N6-adenosine threonylcarbamoyltransferase (356 aa).

H115 and H119 together coordinate Fe cation. Substrate is bound by residues L138–G142, D171, G184, and N283. A Fe cation-binding site is contributed by D311.

This sequence belongs to the KAE1 / TsaD family. It depends on Fe(2+) as a cofactor.

It localises to the cytoplasm. It catalyses the reaction L-threonylcarbamoyladenylate + adenosine(37) in tRNA = N(6)-L-threonylcarbamoyladenosine(37) in tRNA + AMP + H(+). Functionally, required for the formation of a threonylcarbamoyl group on adenosine at position 37 (t(6)A37) in tRNAs that read codons beginning with adenine. Is involved in the transfer of the threonylcarbamoyl moiety of threonylcarbamoyl-AMP (TC-AMP) to the N6 group of A37, together with TsaE and TsaB. TsaD likely plays a direct catalytic role in this reaction. This chain is tRNA N6-adenosine threonylcarbamoyltransferase, found in Prochlorococcus marinus (strain NATL2A).